A 74-amino-acid chain; its full sequence is Chitinases 70, 30, and 20.5 kDa (74 aa).

Positions 1 to 27 (XTSATATYAKTQDWGSCFEGKWTIKNT) are N-terminus of 70 kDa chitinase. Positions 28–52 (AACSSYPSWVAGRSYAAGDIVYYTD) are N-terminus of 30 kDa chitinase. An N-terminus of 20.5 kDa chitinase region spans residues 53–74 (XGYTDLPVSRQKMCQNGMVTNC).

This sequence belongs to the glycosyl hydrolase 18 family. Chitinase class II subfamily. In terms of assembly, homodimer, but homotrimers and homotetramers could be observed for the 20.5 and 30 kDa chitinases. In terms of processing, the 70 kDa chitinase is probably the precursor protein of the 30 and 20.5 kDa chitinases.

It catalyses the reaction Random endo-hydrolysis of N-acetyl-beta-D-glucosaminide (1-&gt;4)-beta-linkages in chitin and chitodextrins.. Able to cleave chitin oligomers from N=3 to 6. This is Chitinases 70, 30, and 20.5 kDa from Streptomyces olivaceoviridis (Streptomyces corchorusii).